The sequence spans 150 residues: Large ribosomal subunit protein bL9 (150 aa).

It belongs to the bacterial ribosomal protein bL9 family.

Binds to the 23S rRNA. This is Large ribosomal subunit protein bL9 from Paraburkholderia phymatum (strain DSM 17167 / CIP 108236 / LMG 21445 / STM815) (Burkholderia phymatum).